The sequence spans 29 residues: Protein YldA (29 aa).

A helical membrane pass occupies residues 5–25 (FYILIGFLIMAAIIVMAVLYL).

The protein resides in the cell inner membrane. This chain is Protein YldA, found in Escherichia coli (strain K12).